A 467-amino-acid polypeptide reads, in one-letter code: Chromosomal replication initiator protein DnaA (467 aa).

The segment at 1-79 is domain I, interacts with DnaA modulators; the sequence is MTELDQFWPA…GELPVELRLG (79 aa). The segment at 79-129 is domain II; sequence GAPTARPAAPVAGNSQPKAKEPAKAAASAPAAPSPAKQAAVKAIGGSHEST. The tract at residues 84–126 is disordered; that stretch reads RPAAPVAGNSQPKAKEPAKAAASAPAAPSPAKQAAVKAIGGSH. Positions 102-121 are enriched in low complexity; it reads KAAASAPAAPSPAKQAAVKA. The tract at residues 130–347 is domain III, AAA+ region; that stretch reads RLNPSFTFDT…GALKRVVAYA (218 aa). Positions 175, 177, 178, and 179 each coordinate ATP. The interval 348–467 is domain IV, binds dsDNA; sequence RFTSQNITLE…YEALLSMLRN (120 aa).

Belongs to the DnaA family. In terms of assembly, oligomerizes as a right-handed, spiral filament on DNA at oriC.

It localises to the cytoplasm. Its function is as follows. Plays an essential role in the initiation and regulation of chromosomal replication. ATP-DnaA binds to the origin of replication (oriC) to initiate formation of the DNA replication initiation complex once per cell cycle. Binds the DnaA box (a 9 base pair repeat at the origin) and separates the double-stranded (ds)DNA. Forms a right-handed helical filament on oriC DNA; dsDNA binds to the exterior of the filament while single-stranded (ss)DNA is stabiized in the filament's interior. The ATP-DnaA-oriC complex binds and stabilizes one strand of the AT-rich DNA unwinding element (DUE), permitting loading of DNA polymerase. After initiation quickly degrades to an ADP-DnaA complex that is not apt for DNA replication. Binds acidic phospholipids. The sequence is that of Chromosomal replication initiator protein DnaA from Chromobacterium violaceum (strain ATCC 12472 / DSM 30191 / JCM 1249 / CCUG 213 / NBRC 12614 / NCIMB 9131 / NCTC 9757 / MK).